A 196-amino-acid polypeptide reads, in one-letter code: Carnitine operon protein CaiE (196 aa).

The tract at residues 173–196 (TQPLRQMEENRPRLQGTTDVTPKR) is disordered. Residues 187 to 196 (QGTTDVTPKR) are compositionally biased toward polar residues.

It belongs to the transferase hexapeptide repeat family.

Its pathway is amine and polyamine metabolism; carnitine metabolism. Its function is as follows. Overproduction of CaiE stimulates the activity of CaiB and CaiD. This is Carnitine operon protein CaiE from Escherichia coli O127:H6 (strain E2348/69 / EPEC).